The primary structure comprises 942 residues: MORC family CW-type zinc finger protein 3 (942 aa).

Glycyl lysine isopeptide (Lys-Gly) (interchain with G-Cter in SUMO2) cross-links involve residues K191, K205, K280, and K293. The tract at residues 326-353 (AYEKVGCQLKANNMGVGVVGIIECNFLK) is nuclear matrix binding. Residues 404–454 (KRPDQTWVQCDACLKWRKLPDGIDQLPEKWYCSNNPDPQFRNCEVPEEPED) form a CW-type zinc finger. Positions 413, 416, 435, and 446 each coordinate Zn(2+). The interval 503-594 (SFSPVKESVP…ENSTPKPAVD (92 aa)) is RNA binding. Phosphoserine is present on residues S517 and S543. K558 participates in a covalent cross-link: Glycyl lysine isopeptide (Lys-Gly) (interchain with G-Cter in SUMO2). The residue at position 563 (S563) is a Phosphoserine. A Glycyl lysine isopeptide (Lys-Gly) (interchain with G-Cter in SUMO1); alternate cross-link involves residue K604. K604 is covalently cross-linked (Glycyl lysine isopeptide (Lys-Gly) (interchain with G-Cter in SUMO2); alternate). The interval 623-654 (PKPCVQASSTSTSTSRSDPGITVSTQTDAPGL) is disordered. Low complexity predominate over residues 630 to 639 (SSTSTSTSRS). Glycyl lysine isopeptide (Lys-Gly) (interchain with G-Cter in SUMO1); alternate cross-links involve residues K657, K658, and K743. Glycyl lysine isopeptide (Lys-Gly) (interchain with G-Cter in SUMO2); alternate cross-links involve residues K657, K658, and K743. The stretch at 696 to 874 (SHQLQELRSE…KSTGQQAAAD (179 aa)) forms a coiled coil. S768 bears the Phosphoserine mark. A Glycyl lysine isopeptide (Lys-Gly) (interchain with G-Cter in SUMO1); alternate cross-link involves residue K797. Residue K797 forms a Glycyl lysine isopeptide (Lys-Gly) (interchain with G-Cter in SUMO2); alternate linkage.

Homodimer. The sumoylated form interacts with PML (via SUMO-interacting motif). Interacts with TP53. Post-translationally, sumoylation is involved in interaction with PML and localization to PML nuclear bodies.

It localises to the nucleus. Its subcellular location is the nucleoplasm. It is found in the nucleus matrix. The protein localises to the PML body. The protein resides in the chromosome. With respect to regulation, dimerization of the ATPase domain is strictly required for the catalytic activity and binding to double-stranded DNA. Disrupting the interface between ATPase and the CW domains releases autoinhibition since the CW domain sterically impedes binding of the ATPase domain to DNA. Functionally, nuclear matrix protein which forms MORC3-NBs (nuclear bodies) via an ATP-dependent mechanism and plays a role in innate immunity by restricting different viruses through modulation of the IFN response. Mechanistically, possesses a primary antiviral function through a MORC3-regulated element that activates IFNB1, and this function is guarded by a secondary IFN-repressing function. Sumoylated MORC3-NBs associates with PML-NBs and recruits TP53 and SP100, thus regulating TP53 activity. Binds RNA in vitro. Histone methylation reader which binds to non-methylated (H3K4me0), monomethylated (H3K4me1), dimethylated (H3K4me2) and trimethylated (H3K4me3) 'Lys-4' on histone H3. The order of binding preference is H3K4me3 &gt; H3K4me2 &gt; H3K4me1 &gt; H3K4me0. This chain is MORC family CW-type zinc finger protein 3, found in Mus musculus (Mouse).